The following is a 184-amino-acid chain: Putative axial regulator YABBY 2 (184 aa).

The C4-type zinc finger occupies 15-42 (CSFCTTILAVSVPYASLFTLVTVRCGHC). Polar residues-rich tracts occupy residues 76-94 (LVTR…NLSE) and 171-184 (LDQS…NGYY). Disordered regions lie at residues 76–115 (LVTR…RQRV) and 162–184 (LDGN…NGYY).

This sequence belongs to the YABBY family. As to quaternary structure, interacts with SPL/NZZ and SPEAR2. Expressed at low levels in abaxial regions of lateral aerial organ primordia leading to cotyledons, leaves, flower meristems, sepals, petals, stamen and carpels, but not in roots.

It is found in the nucleus. In terms of biological role, involved in the abaxial cell fate determination during embryogenesis and organogenesis. In Arabidopsis thaliana (Mouse-ear cress), this protein is Putative axial regulator YABBY 2 (YAB2).